A 560-amino-acid polypeptide reads, in one-letter code: NAD-dependent malic enzyme (560 aa).

The active-site Proton donor is tyrosine 100. Arginine 153 lines the NAD(+) pocket. Lysine 171 functions as the Proton acceptor in the catalytic mechanism. The a divalent metal cation site is built by glutamate 242, aspartate 243, and aspartate 266. The NAD(+) site is built by aspartate 266 and asparagine 413.

This sequence belongs to the malic enzymes family. Homotetramer. Mg(2+) is required as a cofactor. The cofactor is Mn(2+).

The enzyme catalyses (S)-malate + NAD(+) = pyruvate + CO2 + NADH. It catalyses the reaction oxaloacetate + H(+) = pyruvate + CO2. The chain is NAD-dependent malic enzyme from Psychromonas ingrahamii (strain DSM 17664 / CCUG 51855 / 37).